Reading from the N-terminus, the 387-residue chain is Phosphoglycerate kinase (387 aa).

Substrate contacts are provided by residues 21-23 (DLN), Arg-36, 59-62 (HLGR), Arg-113, and Arg-146. Residues Lys-197, Glu-314, and 340 to 343 (GGDT) each bind ATP.

It belongs to the phosphoglycerate kinase family. As to quaternary structure, monomer.

Its subcellular location is the cytoplasm. It carries out the reaction (2R)-3-phosphoglycerate + ATP = (2R)-3-phospho-glyceroyl phosphate + ADP. The protein operates within carbohydrate degradation; glycolysis; pyruvate from D-glyceraldehyde 3-phosphate: step 2/5. The chain is Phosphoglycerate kinase from Klebsiella pneumoniae (strain 342).